We begin with the raw amino-acid sequence, 394 residues long: Argininosuccinate synthase (394 aa).

ATP is bound by residues 7–15 and A34; that span reads AYSGGLDTS. Residues Y85 and S90 each coordinate L-citrulline. G115 serves as a coordination point for ATP. 3 residues coordinate L-aspartate: T117, N121, and D122. L-citrulline is bound at residue N121. R125, S176, S185, E261, and Y273 together coordinate L-citrulline.

It belongs to the argininosuccinate synthase family. Type 1 subfamily. In terms of assembly, homotetramer.

Its subcellular location is the cytoplasm. It catalyses the reaction L-citrulline + L-aspartate + ATP = 2-(N(omega)-L-arginino)succinate + AMP + diphosphate + H(+). It functions in the pathway amino-acid biosynthesis; L-arginine biosynthesis; L-arginine from L-ornithine and carbamoyl phosphate: step 2/3. This is Argininosuccinate synthase from Ehrlichia ruminantium (strain Welgevonden).